The chain runs to 118 residues: Small ribosomal subunit protein uS13 (118 aa).

Residues 94–118 (GLPLRGQRTKTNARTRKGPRKPIRK) form a disordered region.

It belongs to the universal ribosomal protein uS13 family. Part of the 30S ribosomal subunit. Forms a loose heterodimer with protein S19. Forms two bridges to the 50S subunit in the 70S ribosome.

In terms of biological role, located at the top of the head of the 30S subunit, it contacts several helices of the 16S rRNA. In the 70S ribosome it contacts the 23S rRNA (bridge B1a) and protein L5 of the 50S subunit (bridge B1b), connecting the 2 subunits; these bridges are implicated in subunit movement. Contacts the tRNAs in the A and P-sites. The chain is Small ribosomal subunit protein uS13 from Alcanivorax borkumensis (strain ATCC 700651 / DSM 11573 / NCIMB 13689 / SK2).